We begin with the raw amino-acid sequence, 178 residues long: High mobility group B protein 1 (178 aa).

2 stretches are compositionally biased toward basic and acidic residues: residues 1–52 (MKTA…DPNK) and 101–118 (APYE…EKQM). 2 disordered regions span residues 1–59 (MKTA…APSA) and 75–178 (NPNV…EEED). A DNA-binding region (HMG box) is located at residues 53 to 122 (PKRAPSAFFV…EYEKQMDAYN (70 aa)). Phosphoserine is present on residues Ser-137 and Ser-146. Positions 140 to 178 (NDEDEASGEEELLEKEAAGDDEEEEEEEDDDDDDDEEED) are enriched in acidic residues.

The protein belongs to the HMGB family. Expressed in cotyledons, roots, stems, leaves and flowers (excluding pedicels).

It is found in the nucleus. Its function is as follows. Binds preferentially double-stranded DNA. Modulates general plant growth and stress tolerance. Confers sensitivity to salt and genotoxic (methyl methanesulfonate, MMS) stresses. The polypeptide is High mobility group B protein 1 (HMGB1) (Arabidopsis thaliana (Mouse-ear cress)).